A 211-amino-acid chain; its full sequence is Troponin I, cardiac muscle (211 aa).

N-acetylalanine is present on Ala-1. The disordered stretch occupies residues 1 to 43 (ADESRDAAGEARPAPAPVRRRSSANYRAYATEPHAKSKKKISA). The residue at position 4 (Ser-4) is a Phosphoserine. Residue Ser-22 is modified to Phosphoserine; by PHK, PKA and PKD/PRKD1. The residue at position 23 (Ser-23) is a Phosphoserine; by PKA and PKD/PRKD1. At Tyr-26 the chain carries Phosphotyrosine. The residue at position 31 (Thr-31) is a Phosphothreonine; by STK4/MST1. The involved in binding TNC stretch occupies residues 32–79 (EPHAKSKKKISASRKLQLKTLMLQIAKQELEREAEERRGEKGRALSTR). Residues Ser-42 and Ser-44 each carry the phosphoserine; by PKC/PRKCE modification. At Thr-51 the chain carries Phosphothreonine; by STK4/MST1. Residue Ser-77 is modified to Phosphoserine. Residue Thr-78 is modified to Phosphothreonine. A phosphothreonine; by STK4/MST1 mark is found at Thr-129 and Thr-143. An involved in binding TNC and actin region spans residues 129–150 (TQKIFDLRGKFKRPTLRLRVRI). Phosphoserine; by PAK3 is present on Ser-151. Phosphothreonine is present on Thr-182. Ser-200 is modified (phosphoserine).

The protein belongs to the troponin I family. In terms of assembly, interacts with TRIM63. Binds to actin and tropomyosin. Interacts with STK4/MST1. Phosphorylated at Ser-22 and Ser-23 by PRKD1; phosphorylation reduces myofilament calcium sensitivity. Phosphorylated preferentially at Thr-31. Phosphorylation by STK4/MST1 alters its binding affinity to TNNC1 (cardiac Tn-C) and TNNT2 (cardiac Tn-T). Phosphorylated at Ser-42 and Ser-44 by PRKCE; phosphorylation increases myocardium contractile dysfunction. Ser-22 is one of three sites in the region of residues 1-48 that are phosphorylated by phosphorylase kinase.

Functionally, troponin I is the inhibitory subunit of troponin, the thin filament regulatory complex which confers calcium-sensitivity to striated muscle actomyosin ATPase activity. This Oryctolagus cuniculus (Rabbit) protein is Troponin I, cardiac muscle (TNNI3).